A 410-amino-acid chain; its full sequence is Peptidase T (410 aa).

Residue His78 coordinates Zn(2+). The active site involves Asp80. Asp140 provides a ligand contact to Zn(2+). The Proton acceptor role is filled by Glu173. Zn(2+)-binding residues include Glu174, Asp196, and His379.

The protein belongs to the peptidase M20B family. The cofactor is Zn(2+).

The protein resides in the cytoplasm. It carries out the reaction Release of the N-terminal residue from a tripeptide.. Cleaves the N-terminal amino acid of tripeptides. The sequence is that of Peptidase T from Pectobacterium carotovorum subsp. carotovorum (strain PC1).